We begin with the raw amino-acid sequence, 156 residues long: Lipoprotein signal peptidase (156 aa).

Transmembrane regions (helical) follow at residues 57–77 (LFLI…LFIN) and 83–103 (ILKI…IDRI). Active-site residues include Asp110 and Asp129. A helical transmembrane segment spans residues 124–144 (IFNIADVLVSLGTILLIIFII).

This sequence belongs to the peptidase A8 family.

Its subcellular location is the cell membrane. It catalyses the reaction Release of signal peptides from bacterial membrane prolipoproteins. Hydrolyzes -Xaa-Yaa-Zaa-|-(S,diacylglyceryl)Cys-, in which Xaa is hydrophobic (preferably Leu), and Yaa (Ala or Ser) and Zaa (Gly or Ala) have small, neutral side chains.. It functions in the pathway protein modification; lipoprotein biosynthesis (signal peptide cleavage). In terms of biological role, this protein specifically catalyzes the removal of signal peptides from prolipoproteins. The chain is Lipoprotein signal peptidase from Clostridium tetani (strain Massachusetts / E88).